The primary structure comprises 364 residues: Dual-specificity RNA methyltransferase RlmN (364 aa).

Residue Glu-91 is the Proton acceptor of the active site. A Radical SAM core domain is found at 102–337; it reads GTLRITQCLS…AIIRKSKGQD (236 aa). A disulfide bond links Cys-109 and Cys-342. [4Fe-4S] cluster contacts are provided by Cys-116, Cys-120, and Cys-123. Residues 169-170, Ser-201, 223-225, and Asn-299 contribute to the S-adenosyl-L-methionine site; these read GE and SLH. Cys-342 acts as the S-methylcysteine intermediate in catalysis.

This sequence belongs to the radical SAM superfamily. RlmN family. Requires [4Fe-4S] cluster as cofactor.

It localises to the cytoplasm. It catalyses the reaction adenosine(2503) in 23S rRNA + 2 reduced [2Fe-2S]-[ferredoxin] + 2 S-adenosyl-L-methionine = 2-methyladenosine(2503) in 23S rRNA + 5'-deoxyadenosine + L-methionine + 2 oxidized [2Fe-2S]-[ferredoxin] + S-adenosyl-L-homocysteine. It carries out the reaction adenosine(37) in tRNA + 2 reduced [2Fe-2S]-[ferredoxin] + 2 S-adenosyl-L-methionine = 2-methyladenosine(37) in tRNA + 5'-deoxyadenosine + L-methionine + 2 oxidized [2Fe-2S]-[ferredoxin] + S-adenosyl-L-homocysteine. In terms of biological role, specifically methylates position 2 of adenine 2503 in 23S rRNA and position 2 of adenine 37 in tRNAs. m2A2503 modification seems to play a crucial role in the proofreading step occurring at the peptidyl transferase center and thus would serve to optimize ribosomal fidelity. This chain is Dual-specificity RNA methyltransferase RlmN, found in Nitratidesulfovibrio vulgaris (strain ATCC 29579 / DSM 644 / CCUG 34227 / NCIMB 8303 / VKM B-1760 / Hildenborough) (Desulfovibrio vulgaris).